A 360-amino-acid chain; its full sequence is tRNA-specific 2-thiouridylase MnmA (360 aa).

Residues 8–15 and Met-34 each bind ATP; that span reads GMSGGVDS. Positions 94–96 are interaction with target base in tRNA; the sequence is NPD. The Nucleophile role is filled by Cys-99. Residues Cys-99 and Cys-195 are joined by a disulfide bond. An ATP-binding site is contributed by Gly-123. Positions 145–147 are interaction with tRNA; sequence KDQ. The Cysteine persulfide intermediate role is filled by Cys-195. The interaction with tRNA stretch occupies residues 307-308; the sequence is RY.

Belongs to the MnmA/TRMU family.

It is found in the cytoplasm. The enzyme catalyses S-sulfanyl-L-cysteinyl-[protein] + uridine(34) in tRNA + AH2 + ATP = 2-thiouridine(34) in tRNA + L-cysteinyl-[protein] + A + AMP + diphosphate + H(+). Its function is as follows. Catalyzes the 2-thiolation of uridine at the wobble position (U34) of tRNA, leading to the formation of s(2)U34. This is tRNA-specific 2-thiouridylase MnmA from Methylobacillus flagellatus (strain ATCC 51484 / DSM 6875 / VKM B-1610 / KT).